Here is an 836-residue protein sequence, read N- to C-terminus: Translation initiation factor IF-2 (836 aa).

Residues 1 to 233 (MSDTDGKKPL…RSLAAMKRKQ (233 aa)) form a disordered region. Polar residues predominate over residues 18-27 (SGQVKQSFSH). A compositionally biased stretch (low complexity) spans 50 to 60 (SGSSTTTSSPS). Basic and acidic residues predominate over residues 88–156 (KLREVEDAKR…AARRAEEAKR (69 aa)). Residues 167-176 (PAESRASAPP) show a composition bias toward low complexity. Residues 185–206 (SRKEREREADRDRTTKKDDSRR) are compositionally biased toward basic and acidic residues. The region spanning 333–501 (PRPPIITIMG…NIALQAEILD (169 aa)) is the tr-type G domain. The segment at 342–349 (GHVDHGKT) is G1. 342-349 (GHVDHGKT) is a GTP binding site. The tract at residues 367–371 (GITQH) is G2. A G3 region spans residues 389–392 (DTPG). Residues 389 to 393 (DTPGH) and 443 to 446 (NKID) contribute to the GTP site. Residues 443–446 (NKID) form a G4 region. The segment at 479–481 (SAK) is G5.

This sequence belongs to the TRAFAC class translation factor GTPase superfamily. Classic translation factor GTPase family. IF-2 subfamily.

Its subcellular location is the cytoplasm. In terms of biological role, one of the essential components for the initiation of protein synthesis. Protects formylmethionyl-tRNA from spontaneous hydrolysis and promotes its binding to the 30S ribosomal subunits. Also involved in the hydrolysis of GTP during the formation of the 70S ribosomal complex. The chain is Translation initiation factor IF-2 from Cereibacter sphaeroides (strain ATCC 17023 / DSM 158 / JCM 6121 / CCUG 31486 / LMG 2827 / NBRC 12203 / NCIMB 8253 / ATH 2.4.1.) (Rhodobacter sphaeroides).